A 273-amino-acid chain; its full sequence is Arginine and glutamate-rich protein 1 (273 aa).

Basic residues-rich tracts occupy residues Met1 to Ser29 and Val37 to Ser58. The segment at Met1 to Arg74 is necessary and sufficient for RNA binding. The interval Met1 to Gln113 is disordered. Phosphoserine occurs at positions 58 and 60. Thr61 carries the phosphothreonine modification. 2 stretches are compositionally biased toward basic and acidic residues: residues Ser66–Ile84 and Ser93–Gln113. The necessary and sufficient for transcriptional regulation stretch occupies residues Ala75–Asp273. 2 positions are modified to phosphoserine: Ser76 and Ser77. Positions Leu172–Leu176 match the LXXLL motif 1; degenerate motif. An LXXLL motif 2; degenerate motif is present at residues Leu201–Leu205. Residues Met238–Lys253 show a composition bias toward basic and acidic residues. The tract at residues Met238–Asp273 is disordered. Residue Ser266 is modified to Phosphoserine.

This sequence belongs to the ARGLU1 family. As to quaternary structure, interacts with MED1; the interaction is direct. Interacts with PUF60, U2AF2 and JMJD6; may interact with other proteins involved in RNA processing and splicing.

It is found in the nucleus. Its subcellular location is the nucleus speckle. It localises to the chromosome. Functionally, dual function regulator of gene expression; regulator of transcription and modulator of alternative splicing. General coactivator of nuclear receptor-induced gene expression, including genes activated by the glucocorticoid receptor NR3C1. Binds to a subset of pre-mRNAs and to components of the spliceosome machinery to directly modulate basal alternative splicing; involved in simple and complex cassette exon splicing events. Binds its own pre-mRNA and regulates its alternative splicing and degradation; one of the alternatively spliced products is a stable intronic sequence RNA (sisRNA) that binds the protein to regulate its ability to affect splicing. Binding of the sisRNA stimulates phase separation and localization to nuclear speckles, which may contribute to activation of nuclear receptor-induced gene expression. May also indirectly modulate alternative splicing. Regulates transcription of genes involved in heart development, neuronal cell function, protein localization and chromatin localization. Regulates splicing of genes involved in neurogenesis and chromatin organization. Essential for central nervous system development. Required for the estrogen-dependent expression of ESR1 target genes. Can act in cooperation with MED1. In Bos taurus (Bovine), this protein is Arginine and glutamate-rich protein 1 (ARGLU1).